A 1307-amino-acid polypeptide reads, in one-letter code: CRISPR-associated endonuclease Cas12a (1307 aa).

The interval 1 to 35 is WED-I (OBD-I); sequence MTQFEGFTNLYQVSKTLRFELIPQGKTLKHIQEQG. The REC1 (helical-I) stretch occupies residues 36–320; the sequence is FIEEDKARND…SDRNTLSFIL (285 aa). 47 to 51 is a crRNA binding site; it reads YKELK. Residues 74 to 106 adopt a coiled-coil conformation; that stretch reads ENLSAAIDSYRKEKTEETRNALIEEQATYRNAI. CrRNA is bound by residues 175–176 and 307–310; these read NR and KQIL. The segment at 321–526 is WED-II (helical-II); sequence EEFKSDEEVI…ARNYATKKPY (206 aa). Residues 527–598 form a WED-II (OBD-I) region; that stretch reads SVEKFKLNFQ…GFDKMYYDYF (72 aa). The PAM-binding on target DNA DNA-binding region spans 599 to 607; that stretch reads PDAAKMIPK. Residues 599–718 are PI (LHD); sequence PDAAKMIPKC…EYYAELNPLL (120 aa). The tract at residues 719–884 is WED-III (OBD-III); that stretch reads YHISFQRIAE…ITLNYQAANS (166 aa). 752 to 761 lines the crRNA pocket; that stretch reads KGHHGKPNLH. The target DNA DNA-binding region spans 780–783; the sequence is KLNG. The active-site For pre-crRNA processing is His-800. 806-808 contacts crRNA; it reads MLN. Residues Lys-809 and Lys-860 each act as for pre-crRNA processing in the active site. Residues 885–940 form a ruvC-I region; the sequence is PSKFNQRVNAYLKEHPETPIIGIDRGERNLIYITVIDSTGKILEQRSLNTIQQFDY. Catalysis depends on Asp-908, which acts as the For DNase activity of RuvC domain. Residues 941-957 form a bridge helix region; the sequence is QKKLDNREKERVAARQA. Positions 951–968 form a DNA-binding region, target DNA; it reads RVAARQAWSVVGTIKDLK. The tract at residues 958–1066 is ruvC-II; the sequence is WSVVGTIKDL…TQSGFLFYVP (109 aa). Residue Glu-993 is the For DNase activity of RuvC domain of the active site. A DNA-binding region (target DNA) is located at residues 1051–1053; that stretch reads SFA. The interval 1067 to 1262 is nuclease domain; it reads APYTSKIDPL…FQNPEWPMDA (196 aa). Arg-1226 functions as the For DNase activity of nuclease domain in the catalytic mechanism. Residue Asp-1263 is the For DNase activity of RuvC domain of the active site. The segment at 1263–1307 is ruvC-III; the sequence is DANGAYHIALKGQLLLNHLKESKDLKLQNGISNQDWLAYIQELRN.

It belongs to the CRISPR-associated endonuclease Cas12a family. In terms of assembly, monomer. It depends on Mg(2+) as a cofactor.

The catalysed reaction is Endonucleolytic cleavage to 5'-phosphodinucleotide and 5'-phosphooligonucleotide end-products.. The enzyme catalyses RNA = a 5'-hydroxy-ribonucleotide + n nucleoside-2',3'-cyclophosphates.. In terms of biological role, CRISPR (clustered regularly interspaced short palindromic repeat), is an adaptive immune system that provides protection against mobile genetic elements (viruses, transposable elements and conjugative plasmids). CRISPR clusters contain sequences complementary to antecedent mobile elements and target invading nucleic acids. CRISPR clusters are transcribed and processed into CRISPR RNA (crRNA). Recognizes a short motif in the CRISPR repeat sequences (the 5' PAM or protospacer adjacent motif, TTTN in this organism) to help distinguish self versus nonself, as targets within the bacterial CRISPR locus do not have PAMs. Has dsDNA endonuclease activity, results in staggered 4-base 5' overhangs 19 and 22 bases downstream of the PAM on the non-targeted and targeted strand respectively. Non-target strand cleavage by the RuvC domain is probably a prerequisite of target strand cleavage by the Nuc domain. Protects E.coli against plasmids and bacteriophage M13mp18, phage T4 with hydroxymethyl or unmodified (but not glycosylated) cytosines and to a lesser extent against lambda and VpaE1 phage. In this CRISPR system correct processing of pre-crRNA requires only this protein and the CRISPR locus. The chain is CRISPR-associated endonuclease Cas12a from Acidaminococcus sp. (strain BV3L6).